The primary structure comprises 353 residues: Glutamate 5-kinase (353 aa).

Lys-8 is an ATP binding site. Ser-47, Asp-134, and Asn-146 together coordinate substrate. Residue 198–204 (TGGIRSK) participates in ATP binding. Residues 262 to 339 (AGKIYVNKGA…SDLKKILGYE (78 aa)) enclose the PUA domain.

Belongs to the glutamate 5-kinase family.

It localises to the cytoplasm. It catalyses the reaction L-glutamate + ATP = L-glutamyl 5-phosphate + ADP. It participates in amino-acid biosynthesis; L-proline biosynthesis; L-glutamate 5-semialdehyde from L-glutamate: step 1/2. Catalyzes the transfer of a phosphate group to glutamate to form L-glutamate 5-phosphate. This chain is Glutamate 5-kinase, found in Thermotoga maritima (strain ATCC 43589 / DSM 3109 / JCM 10099 / NBRC 100826 / MSB8).